A 569-amino-acid chain; its full sequence is Probable protein phosphatase 2C BIPP2C1 (569 aa).

Disordered stretches follow at residues Glu120–Gly214 and Ser251–Ile279. Basic and acidic residues predominate over residues Glu179–Gly188. The 236-residue stretch at Ala329–Val564 folds into the PPM-type phosphatase domain. The Mn(2+) site is built by Asp358, Gly359, Asp488, and Asp555.

It belongs to the PP2C family. It depends on Mg(2+) as a cofactor. Requires Mn(2+) as cofactor.

The catalysed reaction is O-phospho-L-seryl-[protein] + H2O = L-seryl-[protein] + phosphate. It carries out the reaction O-phospho-L-threonyl-[protein] + H2O = L-threonyl-[protein] + phosphate. Its function is as follows. May play a role in responses to biotic and abiotic stresses. The polypeptide is Probable protein phosphatase 2C BIPP2C1 (BIPP2C1) (Oryza sativa subsp. japonica (Rice)).